The sequence spans 325 residues: Probable cell division protein WhiA (325 aa).

Positions 273-306 form a DNA-binding region, H-T-H motif; it reads SLEELGALADPPLTKDAVAGRIRRLLALADKRAN.

It belongs to the WhiA family.

Functionally, involved in cell division and chromosome segregation. The polypeptide is Probable cell division protein WhiA (Parafrankia sp. (strain EAN1pec)).